Here is a 168-residue protein sequence, read N- to C-terminus: Crossover junction endodeoxyribonuclease RuvC (168 aa).

Active-site residues include aspartate 8, glutamate 68, and aspartate 140. Residues aspartate 8, glutamate 68, and aspartate 140 each coordinate Mg(2+).

Belongs to the RuvC family. In terms of assembly, homodimer which binds Holliday junction (HJ) DNA. The HJ becomes 2-fold symmetrical on binding to RuvC with unstacked arms; it has a different conformation from HJ DNA in complex with RuvA. In the full resolvosome a probable DNA-RuvA(4)-RuvB(12)-RuvC(2) complex forms which resolves the HJ. Mg(2+) is required as a cofactor.

It localises to the cytoplasm. It catalyses the reaction Endonucleolytic cleavage at a junction such as a reciprocal single-stranded crossover between two homologous DNA duplexes (Holliday junction).. Its function is as follows. The RuvA-RuvB-RuvC complex processes Holliday junction (HJ) DNA during genetic recombination and DNA repair. Endonuclease that resolves HJ intermediates. Cleaves cruciform DNA by making single-stranded nicks across the HJ at symmetrical positions within the homologous arms, yielding a 5'-phosphate and a 3'-hydroxyl group; requires a central core of homology in the junction. The consensus cleavage sequence is 5'-(A/T)TT(C/G)-3'. Cleavage occurs on the 3'-side of the TT dinucleotide at the point of strand exchange. HJ branch migration catalyzed by RuvA-RuvB allows RuvC to scan DNA until it finds its consensus sequence, where it cleaves and resolves the cruciform DNA. This is Crossover junction endodeoxyribonuclease RuvC from Gluconobacter oxydans (strain 621H) (Gluconobacter suboxydans).